The primary structure comprises 191 residues: Repressor Rok (191 aa).

Residues 2-43 adopt a coiled-coil conformation; the sequence is FNEREALRLRLEQLNEAEVKVIREYQIERDKIYAKLRELDRN. Over residues 75 to 96 the composition is skewed to low complexity; it reads SYQPQSQQQSVQPQLQSISSLP. Residues 75-116 are disordered; the sequence is SYQPQSQQQSVQPQLQSISSLPAGIPDGTTRRRRGTARPGSK. A DNA-binding region spans residues 95 to 191; sequence LPAGIPDGTT…EIESAESANE (97 aa).

It is found in the cytoplasm. The protein resides in the nucleoid. Repressor of comK, the master regulator of competence development. Overexpression seems to be lethal. Represses at least 20 genes that specify membrane-localized and secreted proteins, including some that encode products with antibiotic activity. Binds to many AT-rich sites in the chromosome, many of which are known or thought to derive from horizontal gene transfer; helps keep mobile element ICEBs1 quiescent in the genome. Binds to its own promoter and is thus probably autoregulatory. The protein is Repressor Rok of Bacillus subtilis (strain 168).